The primary structure comprises 1411 residues: Protein RhsB (1411 aa).

Tandem repeats lie at residues 330–352 (GKQV…HRHT), 353–374 (GRPE…LNPA), 375–417 (GLSY…EHAD), 418–438 (GSVT…TDAA), 439–460 (GRTT…TTPD), 461–481 (GRAS…TGPD), 482–502 (GLEL…TAPD), 503–525 (GDIT…EDAT), 526–546 (GSRK…TDCS), 547–567 (GYVT…HREE), 568–588 (GLSQ…KDTQ), 589–609 (GHET…IAPD), 610–629 (GSRN…TTQG), 630–650 (GLTR…TSEN), 651–671 (GSHT…TGFD), 672–691 (GRTQ…SEDE), 692–711 (GLVT…RTVK), 712–734 (GETA…HISE), 735–758 (GHRV…QTVH), 808–828 (GDTP…LRSF), 829–850 (GRYE…HLNS), 851–871 (LLSD…ISSP), 872–894 (RQTR…TAAN), 895–930 (LDIR…NRIA), 931–959 (RDAH…VIRT), 960–984 (DDER…TQYE), 985–1019 (EPLV…MSLS), and 1162–1186 (GATA…HQLQ). Residues 330 to 1186 (GKQVRSFTYD…LNEENPHQLQ (857 aa)) form a 28 X approximate tandem repeats region.

The protein belongs to the RHS family.

Functionally, rhs elements have a nonessential function. They may play an important role in the natural ecology of the cell. The protein is Protein RhsB (rhsB) of Escherichia coli (strain K12).